The following is a 128-amino-acid chain: 3-aminoacrylate deaminase RutC (128 aa).

Belongs to the RutC family. As to quaternary structure, homotrimer.

It catalyses the reaction (Z)-3-aminoacrylate + H2O + H(+) = 3-oxopropanoate + NH4(+). Functionally, involved in pyrimidine catabolism. Catalyzes the deamination of 3-aminoacrylate to malonic semialdehyde, a reaction that can also occur spontaneously. RutC may facilitate the reaction and modulate the metabolic fitness, rather than catalyzing essential functions. This Shigella flexneri serotype X (strain 2002017) protein is 3-aminoacrylate deaminase RutC.